We begin with the raw amino-acid sequence, 368 residues long: Cell division protein FtsZ 1 (368 aa).

Residues 52–56, 139–141, E170, R174, and D217 contribute to the GTP site; these read GGGCN and GTG.

It belongs to the FtsZ family. As to quaternary structure, homodimer. Polymerizes to form a dynamic ring structure in a strictly GTP-dependent manner. Interacts directly with several other division proteins.

The protein localises to the cytoplasm. Functionally, essential cell division protein that forms a contractile ring structure (Z ring) at the future cell division site. The regulation of the ring assembly controls the timing and the location of cell division. One of the functions of the FtsZ ring is to recruit other cell division proteins to the septum to produce a new cell wall between the dividing cells. Binds GTP and shows GTPase activity. The protein is Cell division protein FtsZ 1 of Archaeoglobus fulgidus (strain ATCC 49558 / DSM 4304 / JCM 9628 / NBRC 100126 / VC-16).